A 650-amino-acid chain; its full sequence is Threonine--tRNA ligase (650 aa).

A TGS domain is found at 1-66 (MVQITLPDGS…EHDAQLAIVT (66 aa)). Residues 247-538 (DHRKIGRDLD…LIENHAGAMP (292 aa)) form a catalytic region. Positions 338, 389, and 515 each coordinate Zn(2+).

This sequence belongs to the class-II aminoacyl-tRNA synthetase family. In terms of assembly, homodimer. Zn(2+) serves as cofactor.

The protein localises to the cytoplasm. The catalysed reaction is tRNA(Thr) + L-threonine + ATP = L-threonyl-tRNA(Thr) + AMP + diphosphate + H(+). Catalyzes the attachment of threonine to tRNA(Thr) in a two-step reaction: L-threonine is first activated by ATP to form Thr-AMP and then transferred to the acceptor end of tRNA(Thr). Also edits incorrectly charged L-seryl-tRNA(Thr). This is Threonine--tRNA ligase from Bordetella petrii (strain ATCC BAA-461 / DSM 12804 / CCUG 43448).